Here is a 58-residue protein sequence, read N- to C-terminus: UPF0391 membrane protein Sputcn32_1322 (58 aa).

2 helical membrane passes run 6–26 and 28–48; these read LMFL…IAGA and AGIA…SLLV.

The protein belongs to the UPF0391 family.

It is found in the cell membrane. The sequence is that of UPF0391 membrane protein Sputcn32_1322 from Shewanella putrefaciens (strain CN-32 / ATCC BAA-453).